A 311-amino-acid polypeptide reads, in one-letter code: Porphobilinogen deaminase (311 aa).

The residue at position 241 (Cys241) is an S-(dipyrrolylmethanemethyl)cysteine.

The protein belongs to the HMBS family. As to quaternary structure, monomer. The cofactor is dipyrromethane.

The enzyme catalyses 4 porphobilinogen + H2O = hydroxymethylbilane + 4 NH4(+). Its pathway is porphyrin-containing compound metabolism; protoporphyrin-IX biosynthesis; coproporphyrinogen-III from 5-aminolevulinate: step 2/4. Its function is as follows. Tetrapolymerization of the monopyrrole PBG into the hydroxymethylbilane pre-uroporphyrinogen in several discrete steps. The sequence is that of Porphobilinogen deaminase from Bacillus pumilus (strain SAFR-032).